The sequence spans 71 residues: Keratin-associated protein 6-1 (71 aa).

The protein belongs to the KRTAP type 6 family. Interacts with hair keratins.

Its function is as follows. In the hair cortex, hair keratin intermediate filaments are embedded in an interfilamentous matrix, consisting of hair keratin-associated proteins (KRTAP), which are essential for the formation of a rigid and resistant hair shaft through their extensive disulfide bond cross-linking with abundant cysteine residues of hair keratins. The matrix proteins include the high-sulfur and high-glycine-tyrosine keratins. This Homo sapiens (Human) protein is Keratin-associated protein 6-1 (KRTAP6-1).